A 543-amino-acid chain; its full sequence is ATP-dependent ubiquitin transferase-like protein Cap2 (543 aa).

Residues 1-159 (MSSAAAVADV…QNCIVAHANG (159 aa)) form an E2-like domain region. Catalysis depends on cysteine 84, which acts as the For E2-like domain. The tract at residues 160–305 (CPLWFITDNE…YLAQRNMPNS (146 aa)) is linker domain. An adenylation plus E1-like domain region spans residues 306–543 (KTLAGKNIAV…RDRECPLCNS (238 aa)). Catalysis depends on for E1-like domain residues cysteine 450 and cysteine 453.

It in the C-terminal section; belongs to the HesA/MoeB/ThiF family. In terms of assembly, forms a Cap2-CdnA complex. A Cap2 dimer is bound on either side by a CdnA monomer.

In terms of biological role, CD-NTase priming component of a CBASS antiviral system. CBASS (cyclic oligonucleotide-based antiphage signaling system) provides immunity against bacteriophages. The CD-NTase protein (CdnA) synthesizes cyclic nucleotides in response to infection; these serve as specific second messenger signals. The signals activate a diverse range of effectors, leading to bacterial cell death and thus abortive phage infection. A type II-A(GA) CBASS system. Acts as a protein transferase, conjugating CdnA, the CD-NTase, to unidentified target(s) in the cell probably via an E1-E2 ubiquitin transferase-like mechanism. This primes CdnA, upon phage infection CdnA activates and makes cyclic nucleotides. Protein conjugation requires ATP. Its function is as follows. The capV-cdnA-cap2-cap3 operon provides about 10(4)-fold protection in strain BWHPSA011 against infection by phage PaMx41. In P.aeruginosa strain PAO1 it confers protection against phages PaMx41 and JBD18 but not JBD67 (JBD18 and JBD67 do not replicate in BWHPSA011 / Pa011). When acb2 in JBD67 is deleted this CBASS operon then protects against JDB67 also. This CBASS system limits prophage induction of lysogenized JBD67 as well as viral lytic replication. This chain is ATP-dependent ubiquitin transferase-like protein Cap2, found in Pseudomonas aeruginosa (strain BWHPSA011 / Pa011).